The chain runs to 1004 residues: Ephrin type-B receptor 2 (1004 aa).

The N-terminal stretch at 1–19 (MGPLWFCCLPLALLPLLAA) is a signal peptide. The Extracellular segment spans residues 20–544 (VEETLMDSTT…QTSVQEKLPL (525 aa)). The Eph LBD domain occupies 21–203 (EETLMDSTTA…FYRKCPRVIQ (183 aa)). 2 disulfides stabilise this stretch: C63-C185 and C98-C108. N-linked (GlcNAc...) asparagine glycans are attached at residues N266, N337, N429, N478, and N483. Fibronectin type-III domains lie at 325 to 435 (IPSA…TNQA) and 436 to 531 (APSA…TMTE). The chain crosses the membrane as a helical span at residues 545 to 565 (IIGSSAAGLVFLIAVVVIIIV). Residues 566–1004 (CNRRRGFERA…QMNQIQSVEV (439 aa)) are Cytoplasmic-facing. Residues 639–902 (VKIEQVIGAG…QIVNTLDKMI (264 aa)) enclose the Protein kinase domain. Residues 645–653 (IGAGEFGEV) and K671 contribute to the ATP site. D764 acts as the Proton acceptor in catalysis. The SAM domain occupies 931–995 (TSFNTVDEWL…LNSIQVMRAQ (65 aa)). The PDZ-binding signature appears at 1002–1004 (VEV).

The protein belongs to the protein kinase superfamily. Tyr protein kinase family. Ephrin receptor subfamily. As to quaternary structure, heterotetramer upon binding of the ligand. The heterotetramer is composed of an ephrin dimer and a receptor dimer. Oligomerization is probably required to induce biological responses. Ligand binding induces cleavage by matrix metalloproteinases (MMPs) such as MMP7/MMP9, producing an EphB2/N-terminal fragment (NTF) and a C-terminal long fragment (EphB2-LF). EphB2-LF is further cleaved by MMPs, producing EphB2/CTF1 which is further cleaved by the PS1/gamma-secretase producing EphB2/CTF2. Wide tissue distribution throughout development and sustained expression in adult brain. The longer form (CEK5+) is specifically expressed in the central nervous system.

It is found in the cell membrane. The protein resides in the cell projection. It localises to the axon. Its subcellular location is the dendrite. It catalyses the reaction L-tyrosyl-[protein] + ATP = O-phospho-L-tyrosyl-[protein] + ADP + H(+). In terms of biological role, receptor tyrosine kinase which binds promiscuously transmembrane ephrin-B family ligands residing on adjacent cells, leading to contact-dependent bidirectional signaling into neighboring cells. The signaling pathway downstream of the receptor is referred to as forward signaling while the signaling pathway downstream of the ephrin ligand is referred to as reverse signaling. Functions in axon guidance during development. In addition to axon guidance, also regulates dendritic spines development and maturation and stimulates the formation of excitatory synapses. The protein is Ephrin type-B receptor 2 (EPHB2) of Gallus gallus (Chicken).